The following is a 119-amino-acid chain: Large ribosomal subunit protein bL20 (119 aa).

Belongs to the bacterial ribosomal protein bL20 family.

Binds directly to 23S ribosomal RNA and is necessary for the in vitro assembly process of the 50S ribosomal subunit. It is not involved in the protein synthesizing functions of that subunit. The sequence is that of Large ribosomal subunit protein bL20 from Dehalococcoides mccartyi (strain ATCC BAA-2266 / KCTC 15142 / 195) (Dehalococcoides ethenogenes (strain 195)).